We begin with the raw amino-acid sequence, 255 residues long: Probable iron chelatin transport ATP-binding protein HP_0888 (255 aa).

Residues 3-240 (LEVKNLSFKY…HNLSALYDTP (238 aa)) form the ABC transporter domain. Residue 35–42 (APNGSGKT) coordinates ATP.

The protein belongs to the ABC transporter superfamily.

It is found in the cell inner membrane. Part of a binding-protein-dependent transport system for an iron chelatin. Probably responsible for energy coupling to the transport system (Potential). The sequence is that of Probable iron chelatin transport ATP-binding protein HP_0888 from Helicobacter pylori (strain ATCC 700392 / 26695) (Campylobacter pylori).